Consider the following 234-residue polypeptide: Homeobox protein ceh-51 (234 aa).

Disordered regions lie at residues 128–154 (PPSFLHHQHQQHPRAPSEKRRGARTPF) and 209–234 (QIKQDAVQQQKSAKEEAEEDQKHVIS). Residues 147–206 (RRGARTPFSDSQLYALRTRFEQCDTIKVDERRKLGAVIGLSPEQIKIWFQNRRFKLRKEK) constitute a DNA-binding region (homeobox). Residues 220–234 (SAKEEAEEDQKHVIS) show a composition bias toward basic and acidic residues.

Belongs to the NK-2 homeobox family.

Its subcellular location is the nucleus. Its function is as follows. Required for mesoderm development, including specification of muscle and coelomocyte precursors. This chain is Homeobox protein ceh-51, found in Caenorhabditis elegans.